A 159-amino-acid chain; its full sequence is RNA pyrophosphohydrolase (159 aa).

A Nudix hydrolase domain is found at 6-149 (GFRPNVGIIL…KREVYRRALK (144 aa)). The short motif at 38 to 59 (GGINPDETPEDALYRELNEEVG) is the Nudix box element.

It belongs to the Nudix hydrolase family. RppH subfamily. The cofactor is a divalent metal cation.

Accelerates the degradation of transcripts by removing pyrophosphate from the 5'-end of triphosphorylated RNA, leading to a more labile monophosphorylated state that can stimulate subsequent ribonuclease cleavage. This chain is RNA pyrophosphohydrolase, found in Pseudomonas putida (strain ATCC 700007 / DSM 6899 / JCM 31910 / BCRC 17059 / LMG 24140 / F1).